A 265-amino-acid polypeptide reads, in one-letter code: Putative N(omega)-hydroxy-L-arginine synthase DcsA (265 aa).

It belongs to the DcsA family. Heme is required as a cofactor.

Functionally, involved in the biosynthesis of the antibiotic D-cycloserine (DCS), a cyclic structural analog of D-alanine, used as an antitubercular agent. Could catalyze the production of N(omega)-hydroxy-L-arginine (NHA) from L-arginine. This chain is Putative N(omega)-hydroxy-L-arginine synthase DcsA, found in Streptomyces lavendulae.